The chain runs to 355 residues: Peptide chain release factor 1 (355 aa).

At Q233 the chain carries N5-methylglutamine. The segment covering 280–293 has biased composition (basic and acidic residues); it reads ERRKKEQERADSRR. Residues 280-308 are disordered; that stretch reads ERRKKEQERADSRRGQVGSGDRSERIRTY.

It belongs to the prokaryotic/mitochondrial release factor family. Methylated by PrmC. Methylation increases the termination efficiency of RF1.

Its subcellular location is the cytoplasm. Its function is as follows. Peptide chain release factor 1 directs the termination of translation in response to the peptide chain termination codons UAG and UAA. The polypeptide is Peptide chain release factor 1 (Rickettsia peacockii (strain Rustic)).